The chain runs to 249 residues: NADH dehydrogenase [ubiquinone] flavoprotein 2, mitochondrial (249 aa).

The N-terminal 32 residues, 1-32 (MFFSAALRARAAGLTAQWGRHVRNLHKTAMQN), are a transit peptide targeting the mitochondrion. Position 61 is an N6-acetyllysine (lysine 61). The [2Fe-2S] cluster site is built by cysteine 135, cysteine 140, cysteine 176, and cysteine 180. Tyrosine 193 is modified (phosphotyrosine; by SRC). Residues 213–249 (IPKPGPRSGRFSCEPAGGLTSLTEPPKGPGFGVQAGL) are disordered.

It belongs to the complex I 24 kDa subunit family. In terms of assembly, core subunit of respiratory chain NADH dehydrogenase (Complex I) which is composed of 45 different subunits. This is a component of the flavoprotein-sulfur (FP) fragment of the enzyme. Requires [2Fe-2S] cluster as cofactor.

It is found in the mitochondrion inner membrane. It carries out the reaction a ubiquinone + NADH + 5 H(+)(in) = a ubiquinol + NAD(+) + 4 H(+)(out). Core subunit of the mitochondrial membrane respiratory chain NADH dehydrogenase (Complex I) which catalyzes electron transfer from NADH through the respiratory chain, using ubiquinone as an electron acceptor. Parts of the peripheral arm of the enzyme, where the electrons from NADH are accepted by flavin mononucleotide (FMN) and then passed along a chain of iron-sulfur clusters by electron tunnelling to the final acceptor ubiquinone. Contains one iron-sulfur cluster. This Gorilla gorilla gorilla (Western lowland gorilla) protein is NADH dehydrogenase [ubiquinone] flavoprotein 2, mitochondrial.